Consider the following 353-residue polypeptide: Alcohol dehydrogenase 1 (353 aa).

Zn(2+) contacts are provided by cysteine 47, histidine 70, cysteine 101, cysteine 104, cysteine 107, cysteine 115, and cysteine 157. NAD(+)-binding positions include 181–187 (GAGGGLG), aspartate 205, lysine 210, 274–276 (IGL), and arginine 346.

This sequence belongs to the zinc-containing alcohol dehydrogenase family. As to quaternary structure, homotetramer. Zn(2+) is required as a cofactor.

It is found in the cytoplasm. It catalyses the reaction a primary alcohol + NAD(+) = an aldehyde + NADH + H(+). The enzyme catalyses a secondary alcohol + NAD(+) = a ketone + NADH + H(+). This Neurospora crassa (strain ATCC 24698 / 74-OR23-1A / CBS 708.71 / DSM 1257 / FGSC 987) protein is Alcohol dehydrogenase 1 (adh-1).